The primary structure comprises 106 residues: UPF0060 membrane protein Mrad2831_0929 (106 aa).

4 helical membrane passes run 3–23, 30–50, 59–79, and 87–104; these read LLAY…FWAW, AWWT…LTLV, FAAY…LAEG, and LAGS…LLGR.

This sequence belongs to the UPF0060 family.

The protein resides in the cell inner membrane. The polypeptide is UPF0060 membrane protein Mrad2831_0929 (Methylobacterium radiotolerans (strain ATCC 27329 / DSM 1819 / JCM 2831 / NBRC 15690 / NCIMB 10815 / 0-1)).